A 1237-amino-acid polypeptide reads, in one-letter code: Rho guanine nucleotide exchange factor 10-like protein (1237 aa).

2 disordered regions span residues 1 to 117 (MASS…SSRR) and 132 to 203 (YDDV…QPKM). The segment covering 25-45 (EAEDDPGEGFEFDDSDDDEDT) has biased composition (acidic residues). Residue Ser-39 is modified to Phosphoserine. Phosphotyrosine occurs at positions 132 and 153. 2 stretches are compositionally biased toward basic and acidic residues: residues 146–163 (EAERNQPYEDARQDRAPQ) and 184–194 (EEAKPEAEPTK). Ser-241 bears the Phosphoserine mark. The DH domain maps to 276-463 (VRRHILGSIV…ETLAEKLNEQ (188 aa)). Disordered stretches follow at residues 1091–1118 (QEEAEGQQAEEDKPDGPAPEPAPVPASH) and 1142–1164 (PGPLLSVREPEPADGSALEHSEE).

As to quaternary structure, interacts with RHOA, RHOB and RHOC.

Its subcellular location is the cytoplasm. Acts as a guanine nucleotide exchange factor (GEF) for RHOA, RHOB and RHOC. This Bos taurus (Bovine) protein is Rho guanine nucleotide exchange factor 10-like protein (ARHGEF10L).